Consider the following 417-residue polypeptide: Gamma-glutamyl phosphate reductase (417 aa).

The protein belongs to the gamma-glutamyl phosphate reductase family.

It localises to the cytoplasm. The catalysed reaction is L-glutamate 5-semialdehyde + phosphate + NADP(+) = L-glutamyl 5-phosphate + NADPH + H(+). The protein operates within amino-acid biosynthesis; L-proline biosynthesis; L-glutamate 5-semialdehyde from L-glutamate: step 2/2. Its function is as follows. Catalyzes the NADPH-dependent reduction of L-glutamate 5-phosphate into L-glutamate 5-semialdehyde and phosphate. The product spontaneously undergoes cyclization to form 1-pyrroline-5-carboxylate. This chain is Gamma-glutamyl phosphate reductase, found in Legionella pneumophila (strain Lens).